The following is a 382-amino-acid chain: MSLNIFWFLPTHGDGKYLGTSDGARAVDHGYLQQIAQAADRLGFGGVLIPTGRSCEDSWLVAASLIPVTQRLKFLVALRPGIISPTVAARQAATLDRLSNGRALFNLVTGGDPDELAGDGLHLNHQERYEASVEFTRIWRKVLEGENVDYDGKHIQVKGAKLLYPPIQQPRPPLYFGGSSEAAQDLAAEQVELYLTWGEPPSAVAEKIAQVREKAAAQGREVRFGIRLHVIVRETNEEAWAAADRLISHLDDDTISRAQASLARFDSVGQQRMAALHGGNRDNLEVSPNLWAGVGLVRGGAGTALVGDGPTVAARVKEYAELGIDTFIFSGYPHLEESYRVAELLFPHLDVQRPEQPKTGGYVSPFGEMVANDILPKSVSQS.

The protein belongs to the SsuD family.

The enzyme catalyses an alkanesulfonate + FMNH2 + O2 = an aldehyde + FMN + sulfite + H2O + 2 H(+). In terms of biological role, catalyzes the desulfonation of aliphatic sulfonates. The polypeptide is Alkanesulfonate monooxygenase (Pseudomonas putida (strain GB-1)).